The primary structure comprises 273 residues: Dermonecrotic toxin LarSicTox-alphaIB1aiv (273 aa).

H5 is an active-site residue. E25 and D27 together coordinate Mg(2+). H41 serves as the catalytic Nucleophile. Disulfide bonds link C45/C51 and C47/C190. Mg(2+) is bound at residue D85. N-linked (GlcNAc...) asparagine glycosylation is present at N250.

The protein belongs to the arthropod phospholipase D family. Class II subfamily. Mg(2+) serves as cofactor. Expressed by the venom gland.

It localises to the secreted. It carries out the reaction an N-(acyl)-sphingosylphosphocholine = an N-(acyl)-sphingosyl-1,3-cyclic phosphate + choline. It catalyses the reaction an N-(acyl)-sphingosylphosphoethanolamine = an N-(acyl)-sphingosyl-1,3-cyclic phosphate + ethanolamine. The catalysed reaction is a 1-acyl-sn-glycero-3-phosphocholine = a 1-acyl-sn-glycero-2,3-cyclic phosphate + choline. The enzyme catalyses a 1-acyl-sn-glycero-3-phosphoethanolamine = a 1-acyl-sn-glycero-2,3-cyclic phosphate + ethanolamine. Its function is as follows. Dermonecrotic toxins cleave the phosphodiester linkage between the phosphate and headgroup of certain phospholipids (sphingolipid and lysolipid substrates), forming an alcohol (often choline) and a cyclic phosphate. This toxin acts on sphingomyelin (SM). It may also act on ceramide phosphoethanolamine (CPE), lysophosphatidylcholine (LPC) and lysophosphatidylethanolamine (LPE), but not on lysophosphatidylserine (LPS), and lysophosphatidylglycerol (LPG). It acts by transphosphatidylation, releasing exclusively cyclic phosphate products as second products. Induces dermonecrosis, hemolysis, increased vascular permeability, edema, inflammatory response, and platelet aggregation. This chain is Dermonecrotic toxin LarSicTox-alphaIB1aiv, found in Loxosceles arizonica (Arizona brown spider).